The chain runs to 258 residues: Acyl-[acyl-carrier-protein]--UDP-N-acetylglucosamine O-acyltransferase (258 aa).

It belongs to the transferase hexapeptide repeat family. LpxA subfamily. As to quaternary structure, homotrimer.

The protein localises to the cytoplasm. It catalyses the reaction a (3R)-hydroxyacyl-[ACP] + UDP-N-acetyl-alpha-D-glucosamine = a UDP-3-O-[(3R)-3-hydroxyacyl]-N-acetyl-alpha-D-glucosamine + holo-[ACP]. Its pathway is glycolipid biosynthesis; lipid IV(A) biosynthesis; lipid IV(A) from (3R)-3-hydroxytetradecanoyl-[acyl-carrier-protein] and UDP-N-acetyl-alpha-D-glucosamine: step 1/6. Involved in the biosynthesis of lipid A, a phosphorylated glycolipid that anchors the lipopolysaccharide to the outer membrane of the cell. This is Acyl-[acyl-carrier-protein]--UDP-N-acetylglucosamine O-acyltransferase from Pseudomonas syringae pv. syringae (strain B728a).